The sequence spans 368 residues: tRNA-specific 2-thiouridylase MnmA (368 aa).

ATP is bound by residues 11-18 (GMSGGVDS) and methionine 37. An interaction with target base in tRNA region spans residues 97 to 99 (NPD). Catalysis depends on cysteine 102, which acts as the Nucleophile. Residues cysteine 102 and cysteine 199 are joined by a disulfide bond. Glycine 127 serves as a coordination point for ATP. An interaction with tRNA region spans residues 149–151 (KDQ). Cysteine 199 acts as the Cysteine persulfide intermediate in catalysis. The segment at 311 to 312 (RY) is interaction with tRNA.

Belongs to the MnmA/TRMU family. Interacts with TusE.

Its subcellular location is the cytoplasm. It carries out the reaction S-sulfanyl-L-cysteinyl-[protein] + uridine(34) in tRNA + AH2 + ATP = 2-thiouridine(34) in tRNA + L-cysteinyl-[protein] + A + AMP + diphosphate + H(+). In terms of biological role, catalyzes the 2-thiolation of uridine at the wobble position (U34) of tRNA(Lys), tRNA(Glu) and tRNA(Gln), leading to the formation of s(2)U34, the first step of tRNA-mnm(5)s(2)U34 synthesis. Sulfur is provided by IscS, via a sulfur-relay system. Binds ATP and its substrate tRNAs. This is tRNA-specific 2-thiouridylase MnmA from Shigella flexneri serotype 5b (strain 8401).